Reading from the N-terminus, the 337-residue chain is Protein FAM169B (337 aa).

The disordered stretch occupies residues 278–326 (STVHPKCSEEDTDTPGQASQEDGPTQFNHGESHKEWAVGEPERTQNGRR). A compositionally biased stretch (polar residues) spans 291–306 (TPGQASQEDGPTQFNH). A compositionally biased stretch (basic and acidic residues) spans 307 to 322 (GESHKEWAVGEPERTQ).

This sequence belongs to the FAM169 family.

This is Protein FAM169B (Fam169b) from Mus musculus (Mouse).